A 376-amino-acid polypeptide reads, in one-letter code: tRNA-specific 2-thiouridylase MnmA (376 aa).

Residues Gly14–Ser21 and Met40 contribute to the ATP site. The tract at residues Asn100–Asp102 is interaction with target base in tRNA. Cys105 serves as the catalytic Nucleophile. Residues Cys105 and Cys202 are joined by a disulfide bond. Gly129 provides a ligand contact to ATP. An interaction with tRNA region spans residues Lys152–Gln154. Cys202 functions as the Cysteine persulfide intermediate in the catalytic mechanism. An interaction with tRNA region spans residues Arg315 to Tyr316.

The protein belongs to the MnmA/TRMU family.

Its subcellular location is the cytoplasm. The enzyme catalyses S-sulfanyl-L-cysteinyl-[protein] + uridine(34) in tRNA + AH2 + ATP = 2-thiouridine(34) in tRNA + L-cysteinyl-[protein] + A + AMP + diphosphate + H(+). In terms of biological role, catalyzes the 2-thiolation of uridine at the wobble position (U34) of tRNA, leading to the formation of s(2)U34. This is tRNA-specific 2-thiouridylase MnmA from Lactococcus lactis subsp. lactis (strain IL1403) (Streptococcus lactis).